We begin with the raw amino-acid sequence, 171 residues long: Co-chaperone protein HscB (171 aa).

Residues 2 to 74 form the J domain; the sequence is DYFTLFGLPA…LTRAEYLLSL (73 aa).

It belongs to the HscB family. Interacts with HscA and stimulates its ATPase activity. Interacts with IscU.

Co-chaperone involved in the maturation of iron-sulfur cluster-containing proteins. Seems to help targeting proteins to be folded toward HscA. The protein is Co-chaperone protein HscB of Citrobacter koseri (strain ATCC BAA-895 / CDC 4225-83 / SGSC4696).